The primary structure comprises 387 residues: Probable aminomethyltransferase, mitochondrial (387 aa).

The substrate site is built by Glu-219, Arg-248, and Tyr-385.

This sequence belongs to the GcvT family. In terms of assembly, the glycine cleavage system is composed of four proteins: P, T, L and H.

Its subcellular location is the mitochondrion. It carries out the reaction N(6)-[(R)-S(8)-aminomethyldihydrolipoyl]-L-lysyl-[protein] + (6S)-5,6,7,8-tetrahydrofolate = N(6)-[(R)-dihydrolipoyl]-L-lysyl-[protein] + (6R)-5,10-methylene-5,6,7,8-tetrahydrofolate + NH4(+). Functionally, the glycine cleavage system catalyzes the degradation of glycine. The polypeptide is Probable aminomethyltransferase, mitochondrial (gcv1) (Schizosaccharomyces pombe (strain 972 / ATCC 24843) (Fission yeast)).